Here is a 384-residue protein sequence, read N- to C-terminus: MKPHFRNPVERMYQDTFSDNFYNRPILSHRNTVWLCYEVKTKGPSRPPLDAKIFRGQVYSKLKYHPEMRFFHWFSKWRKLHRDQEYEVTWYISWSPCTKCTRDVATFLAEDPKVTLTIFVARLYYFWDPDYQEALRSLCQKRDGPRATMKIMNYDEFQHCWSKFVYSQRELFEPWNNLPKYYILLHIMLGEILRHSMDPPTFTSNFNNELWVRGRHETYLCYEVERLHNDTWVLLNQRRGFLCNQAPHKHGFLEGRHAELCFLDVIPFWKLDLHQDYRVTCFTSWSPCFSCAQEMAKFISNNKHVSLCIFAARIYDDQGRCQEGLRTLAKAGAKISIMTYSEFKHCWDTFVDHQGCPFQPWDGLEEHSQALSGRLRAILQNQGN.

Positions 1–60 (MKPHFRNPVERMYQDTFSDNFYNRPILSHRNTVWLCYEVKTKGPSRPPLDAKIFRGQVYS) are essential for cytoplasmic localization. CMP/dCMP-type deaminase domains follow at residues 29–138 (HRNT…LRSL) and 214–328 (GRHE…LRTL). Position 32 is a phosphothreonine; by PKA (threonine 32). Residues histidine 65, cysteine 97, and cysteine 100 each contribute to the Zn(2+) site. The tract at residues 209-336 (ELWVRGRHET…TLAKAGAKIS (128 aa)) is necessary for homooligomerization. The interaction with DNA stretch occupies residues 213 to 215 (RGR). Residue threonine 218 is modified to Phosphothreonine; by PKA and CAMK2. Histidine 257 contributes to the Zn(2+) binding site. Residue glutamate 259 is the Proton donor of the active site. Residues cysteine 288 and cysteine 291 each coordinate Zn(2+). Positions 313–320 (RIYDDQGR) are interaction with DNA.

It belongs to the cytidine and deoxycytidylate deaminase family. As to quaternary structure, homodimer. Homooligomer. Can bind RNA to form ribonucleoprotein complexes of high-molecular-mass (HMM) or low-molecular-mass (LMM). HMM is inactive and heterogeneous in protein composition because of binding nonselectively to cellular RNAs, which in turn are associated with variety of cellular proteins. The LMM form which is enzymatically active has few or no RNAs associated. Its ability to form homooligomer is distinct from its ability to assemble into HMM. Interacts with APOBEC3B, APOBEC3F, MOV10, AGO2, EIF4E, EIF4ENIF1, DCP2 and DDX6 in an RNA-dependent manner. Interacts with AGO1, AGO3 and PKA/PRKACA. Zn(2+) serves as cofactor.

The protein resides in the cytoplasm. It localises to the nucleus. Its subcellular location is the P-body. It catalyses the reaction a 2'-deoxycytidine in single-stranded DNA + H2O + H(+) = a 2'-deoxyuridine in single-stranded DNA + NH4(+). Its function is as follows. DNA deaminase (cytidine deaminase) which acts as an inhibitor of retrovirus replication and retrotransposon mobility via deaminase-dependent and -independent mechanisms. Exhibits antiviral activity against vif-deficient: HIV-1 and simian immunodeficiency viruses (SIVs) and also against simian foamy virus (SFV). After the penetration of retroviral nucleocapsids into target cells of infection and the initiation of reverse transcription, it can induce the conversion of cytosine to uracil in the minus-sense single-strand viral DNA, leading to G-to-A hypermutations in the subsequent plus-strand viral DNA. The resultant detrimental levels of mutations in the proviral genome, along with a deamination-independent mechanism that works prior to the proviral integration, together exert efficient antiretroviral effects in infected target cells. Selectively targets single-stranded DNA and does not deaminate double-stranded DNA or single- or double-stranded RNA. May inhibit the mobility of LTR retrotransposons. The sequence is that of DNA dC-&gt;dU-editing enzyme APOBEC-3G (APOBEC3G) from Pan troglodytes (Chimpanzee).